Here is an 824-residue protein sequence, read N- to C-terminus: Tuftelin-interacting protein 11 (824 aa).

The disordered stretch occupies residues 1–135 (MSMSHLYGKD…RTFAGGIKSN (135 aa)). Residues 11–25 (EDSDGVEMENFEITD) show a composition bias toward acidic residues. Basic and acidic residues-rich tracts occupy residues 41-61 (QTKE…DERP) and 85-114 (PAAE…EAKK). Polar residues predominate over residues 122–135 (KPSQRTFAGGIKSN). Positions 145–191 (TKGIGQKLLQKMGYMPGRGLGKNAQGIIAPIEAKQRRGKGAVGAYGS) constitute a G-patch domain.

This sequence belongs to the TFP11/STIP family. In terms of assembly, identified in the spliceosome C complex.

The protein localises to the nucleus. Its function is as follows. Involved in pre-mRNA splicing, specifically in spliceosome disassembly during late-stage splicing events. The polypeptide is Tuftelin-interacting protein 11 (tfip11) (Xenopus laevis (African clawed frog)).